Here is a 259-residue protein sequence, read N- to C-terminus: MGSLSSRGKTSSPSPSSSGPDQEPVSMQPERHKVTAVALGSFPAGEQARLSLRLGEPLTIISEDGDWWTVQSEVSGREYHMPSVYVAKVAHGWLYEGLSREKAEELLLLPGNPGGAFLIRESQTRRGCYSLSVRLSRPASWDRIRHYRIQRLDNGWLYISPRLTFPSLHALVEHYSELADGICCPLREPCVLQKLGPLPGKDTPPPVTVPTSSLNWKKLDRSLLFLEAPASGEASLLSEGLRESLSSYISLAEDPLDDA.

The segment covering 1 to 20 (MGSLSSRGKTSSPSPSSSGP) has biased composition (low complexity). Residues 1 to 30 (MGSLSSRGKTSSPSPSSSGPDQEPVSMQPE) form a disordered region. Glycine 2 is lipidated: N-myristoyl glycine. Positions 31–91 (RHKVTAVALG…PSVYVAKVAH (61 aa)) constitute an SH3 domain. The 98-residue stretch at 93-190 (WLYEGLSREK…GICCPLREPC (98 aa)) folds into the SH2 domain. An SLA C-terminal region spans residues 190-259 (CVLQKLGPLP…SLAEDPLDDA (70 aa)).

In terms of assembly, interacts (via its C-terminal domain) with CBL (phosphorylated). Interacts (via SH2 domain) with ZAP70 (phosphorylated) and CD3Z (phosphorylated). Interacts (via SH2 domain) with CSF1R (phosphorylated). Post-translationally, phosphorylated by CSF1R. As to expression, mainly expressed in immune system. Highly expressed in spleen and thymus and expressed at intermediate levels in lung. Not expressed in liver, heart and brain. Isoform 1 is predominant in lung and spleen, while isoform 2 is predominant in thymus.

The protein resides in the cytoplasm. It is found in the cell membrane. It localises to the cytoplasmic vesicle. The protein localises to the late endosome. Functionally, adapter protein, which negatively regulates T-cell receptor (TCR) signaling. Inhibits T-cell antigen-receptor induced activation of nuclear factor of activated T-cells. May act by linking signaling proteins such as ZAP70 with CBL, leading to a CBL dependent degradation of signaling proteins. The chain is Src-like-adapter 2 (Sla2) from Mus musculus (Mouse).